Reading from the N-terminus, the 257-residue chain is Ribonuclease HII (257 aa).

The RNase H type-2 domain maps to 72–257 (TYIAGIDEVG…FAPIKDMIQK (186 aa)). Residues Asp78, Glu79, and Asp170 each coordinate a divalent metal cation.

It belongs to the RNase HII family. It depends on Mn(2+) as a cofactor. Mg(2+) is required as a cofactor.

The protein localises to the cytoplasm. It catalyses the reaction Endonucleolytic cleavage to 5'-phosphomonoester.. In terms of biological role, endonuclease that specifically degrades the RNA of RNA-DNA hybrids. The protein is Ribonuclease HII of Bacillus cereus (strain ATCC 14579 / DSM 31 / CCUG 7414 / JCM 2152 / NBRC 15305 / NCIMB 9373 / NCTC 2599 / NRRL B-3711).